The primary structure comprises 680 residues: UvrABC system protein B (680 aa).

The Helicase ATP-binding domain maps to 27-422 (AGALGGVTFQ…GRMAGEHVAE (396 aa)). 40-47 (GATGTGKT) is an ATP binding site. The Beta-hairpin signature appears at 93–116 (YYDYYQPEAYIPQTDTYIEKSASI). One can recognise a Helicase C-terminal domain in the interval 443 to 609 (QVDDLLHEIH…PIVKRLDANS (167 aa)). A UVR domain is found at 641–676 (PELVSQLEIQMRDAAKKLEFEKAAEYRDKIHKLRER).

It belongs to the UvrB family. As to quaternary structure, forms a heterotetramer with UvrA during the search for lesions. Interacts with UvrC in an incision complex.

The protein resides in the cytoplasm. The UvrABC repair system catalyzes the recognition and processing of DNA lesions. A damage recognition complex composed of 2 UvrA and 2 UvrB subunits scans DNA for abnormalities. Upon binding of the UvrA(2)B(2) complex to a putative damaged site, the DNA wraps around one UvrB monomer. DNA wrap is dependent on ATP binding by UvrB and probably causes local melting of the DNA helix, facilitating insertion of UvrB beta-hairpin between the DNA strands. Then UvrB probes one DNA strand for the presence of a lesion. If a lesion is found the UvrA subunits dissociate and the UvrB-DNA preincision complex is formed. This complex is subsequently bound by UvrC and the second UvrB is released. If no lesion is found, the DNA wraps around the other UvrB subunit that will check the other stand for damage. The chain is UvrABC system protein B from Gloeobacter violaceus (strain ATCC 29082 / PCC 7421).